The chain runs to 352 residues: S-adenosylmethionine:tRNA ribosyltransferase-isomerase (352 aa).

Belongs to the QueA family. Monomer.

Its subcellular location is the cytoplasm. The catalysed reaction is 7-aminomethyl-7-carbaguanosine(34) in tRNA + S-adenosyl-L-methionine = epoxyqueuosine(34) in tRNA + adenine + L-methionine + 2 H(+). Its pathway is tRNA modification; tRNA-queuosine biosynthesis. Its function is as follows. Transfers and isomerizes the ribose moiety from AdoMet to the 7-aminomethyl group of 7-deazaguanine (preQ1-tRNA) to give epoxyqueuosine (oQ-tRNA). This Bacteroides fragilis (strain ATCC 25285 / DSM 2151 / CCUG 4856 / JCM 11019 / LMG 10263 / NCTC 9343 / Onslow / VPI 2553 / EN-2) protein is S-adenosylmethionine:tRNA ribosyltransferase-isomerase.